The sequence spans 172 residues: Endoribonuclease YbeY (172 aa).

Residues 1–21 form a disordered region; sequence MTLHVGAEPAPREDDTEDALR. Residues 10 to 21 are compositionally biased toward basic and acidic residues; it reads APREDDTEDALR. 3 residues coordinate Zn(2+): His-134, His-138, and His-144.

The protein belongs to the endoribonuclease YbeY family. It depends on Zn(2+) as a cofactor.

The protein localises to the cytoplasm. Its function is as follows. Single strand-specific metallo-endoribonuclease involved in late-stage 70S ribosome quality control and in maturation of the 3' terminus of the 16S rRNA. This chain is Endoribonuclease YbeY, found in Burkholderia lata (strain ATCC 17760 / DSM 23089 / LMG 22485 / NCIMB 9086 / R18194 / 383).